The following is a 206-amino-acid chain: Glycerol-3-phosphate acyltransferase 1 (206 aa).

The next 5 membrane-spanning stretches (helical) occupy residues leucine 7–leucine 27, isoleucine 54–isoleucine 74, aspartate 81–phenylalanine 101, isoleucine 114–isoleucine 134, and tryptophan 155–phenylalanine 175.

It belongs to the PlsY family. Probably interacts with PlsX.

The protein resides in the cell membrane. It catalyses the reaction an acyl phosphate + sn-glycerol 3-phosphate = a 1-acyl-sn-glycero-3-phosphate + phosphate. It functions in the pathway lipid metabolism; phospholipid metabolism. Its function is as follows. Catalyzes the transfer of an acyl group from acyl-phosphate (acyl-PO(4)) to glycerol-3-phosphate (G3P) to form lysophosphatidic acid (LPA). This enzyme utilizes acyl-phosphate as fatty acyl donor, but not acyl-CoA or acyl-ACP. This is Glycerol-3-phosphate acyltransferase 1 from Lactobacillus johnsonii (strain CNCM I-12250 / La1 / NCC 533).